The chain runs to 552 residues: Hyaluronan synthase 2 (552 aa).

Over Met1–Arg11 the chain is Cytoplasmic. Residues Ile12 to Val32 form a helical membrane-spanning segment. Residues Gly33 to Ser45 are Extracellular-facing. Residues Phe46–Leu66 traverse the membrane as a helical segment. The Cytoplasmic portion of the chain corresponds to Glu67–Leu374. Residue Thr110 is modified to Phosphothreonine. Lys190 is covalently cross-linked (Glycyl lysine isopeptide (Lys-Gly) (interchain with G-Cter in ubiquitin)). O-linked (GlcNAc) serine glycosylation occurs at Ser221. Thr328 is modified (phosphothreonine). A helical transmembrane segment spans residues Trp375 to Ile395. The Extracellular portion of the chain corresponds to Gln396–Lys402. The helical transmembrane segment at Ile403 to Phe423 threads the bilayer. Over Ala424–Gly429 the chain is Cytoplasmic. A helical membrane pass occupies residues Asn430 to Ala450. Over Lys451–Phe475 the chain is Extracellular. The chain crosses the membrane as a helical span at residues Ile476 to Ile496. The Cytoplasmic segment spans residues Tyr497–Thr510. A helical membrane pass occupies residues Val511–Val531. At Val532–Val552 the chain is on the extracellular side.

Belongs to the NodC/HAS family. As to quaternary structure, homodimer; dimerization promotes enzymatic activity. Forms heterodimer with HAS3. Forms heterodimer with HAS1. Mg(2+) is required as a cofactor. Post-translationally, phosphorylation at Thr-328 is essential for hyaluronan synthase activity. O-GlcNAcylation at Ser-221 increases the stability of HAS2 and plasma membrane localization. In terms of processing, ubiquitination at Lys-190; this ubiquitination is essential for hyaluronan synthase activity and homo- or hetero-oligomerization. Can also be poly-ubiquitinated. Deubiquitinated by USP17 and USP4. USP17 efficiently removes 'Lys-63'- and 'Lys-48'-linked polyubiquitin chains, whereas USP4 preferentially removes monoubiquitination and, partially, both 'Lys-63'- and 'Lys-48'-linked polyubiquitin chain. As to expression, expressed in corneal endothelial cells.

Its subcellular location is the cell membrane. It is found in the endoplasmic reticulum membrane. The protein localises to the vesicle. The protein resides in the golgi apparatus membrane. It localises to the lysosome. The enzyme catalyses [hyaluronan](n) + UDP-N-acetyl-alpha-D-glucosamine = N-acetyl-beta-D-glucosaminyl-(1-&gt;4)-[hyaluronan](n) + UDP + H(+). It carries out the reaction N-acetyl-beta-D-glucosaminyl-(1-&gt;4)-[hyaluronan](n) + UDP-alpha-D-glucuronate = [hyaluronan](n+1) + UDP + H(+). The protein operates within glycan biosynthesis; hyaluronan biosynthesis. In terms of biological role, catalyzes the addition of GlcNAc or GlcUA monosaccharides to the nascent hyaluronan polymer. Therefore, it is essential to hyaluronan synthesis a major component of most extracellular matrices that has a structural role in tissues architectures and regulates cell adhesion, migration and differentiation. This is one of three isoenzymes responsible for cellular hyaluronan synthesis and it is particularly responsible for the synthesis of high molecular mass hyaluronan. The polypeptide is Hyaluronan synthase 2 (HAS2) (Bos taurus (Bovine)).